Reading from the N-terminus, the 132-residue chain is Phosphoribosyl-AMP cyclohydrolase (132 aa).

Asp-82 is a binding site for Mg(2+). Cys-83 contacts Zn(2+). Positions 84 and 86 each coordinate Mg(2+). 2 residues coordinate Zn(2+): Cys-99 and Cys-106.

The protein belongs to the PRA-CH family. As to quaternary structure, homodimer. Mg(2+) is required as a cofactor. Requires Zn(2+) as cofactor.

Its subcellular location is the cytoplasm. It catalyses the reaction 1-(5-phospho-beta-D-ribosyl)-5'-AMP + H2O = 1-(5-phospho-beta-D-ribosyl)-5-[(5-phospho-beta-D-ribosylamino)methylideneamino]imidazole-4-carboxamide. It functions in the pathway amino-acid biosynthesis; L-histidine biosynthesis; L-histidine from 5-phospho-alpha-D-ribose 1-diphosphate: step 3/9. Catalyzes the hydrolysis of the adenine ring of phosphoribosyl-AMP. The chain is Phosphoribosyl-AMP cyclohydrolase from Paramagnetospirillum magneticum (strain ATCC 700264 / AMB-1) (Magnetospirillum magneticum).